We begin with the raw amino-acid sequence, 963 residues long: Protocadherin alpha-C1 (963 aa).

An N-terminal signal peptide occupies residues 1–18 (MVGWGVAVLCLWVSCGAA). Cadherin domains are found at residues 19–124 (AGQL…SPLF), 125–233 (PAGD…APVF), 234–340 (ERSV…APEL), 349–445 (VPED…TPSF), and 446–555 (PQPQ…YPVI). Residues 19–683 (AGQLEYSVPE…GGQLSAQNLY (665 aa)) lie on the Extracellular side of the membrane. An N-linked (GlcNAc...) asparagine glycan is attached at Asn-38. Residues Asn-248 and Asn-274 are each glycosylated (N-linked (GlcNAc...) asparagine). A glycan (N-linked (GlcNAc...) asparagine) is linked at Asn-562. Residues 570–667 (VPRSARTGHL…NSVPQLLPDF (98 aa)) form the Cadherin 6 domain. The helical transmembrane segment at 684–704 (LVIALACISFLFLGCLLFFVC) threads the bilayer. Topologically, residues 705–963 (TKLHQSPGCC…GNSTTDNSDQ (259 aa)) are cytoplasmic. PXXP repeat units lie at residues 812-815 (PRQP), 845-848 (PGGP), 886-889 (PGNP), and 904-907 (PGSP). Positions 812 to 907 (PRQPNPDWRY…PDKFIIPGSP (96 aa)) are 4 X 4 AA repeats of P-X-X-P. Positions 844 to 902 (GPGGPDQQWPTVSSATPEPEAGEVSPPVGAGVNSNSWTFKYGPGNPKQSGPGELPDKFI) are disordered. The disordered stretch occupies residues 914 to 963 (QEPANSQIDKSDFITFGKKEETKKKKKKKKGNKTQEKKEKGNSTTDNSDQ). Positions 922-936 (DKSDFITFGKKEETK) are enriched in basic and acidic residues.

It is found in the cell membrane. Functionally, potential calcium-dependent cell-adhesion protein. May be involved in the establishment and maintenance of specific neuronal connections in the brain. This chain is Protocadherin alpha-C1 (PCDHAC1), found in Pan troglodytes (Chimpanzee).